A 1374-amino-acid polypeptide reads, in one-letter code: DNA-directed RNA polymerase subunit beta (1374 aa).

This sequence belongs to the RNA polymerase beta chain family. In terms of assembly, the RNAP catalytic core consists of 2 alpha, 1 beta, 1 beta' and 1 omega subunit. When a sigma factor is associated with the core the holoenzyme is formed, which can initiate transcription.

The enzyme catalyses RNA(n) + a ribonucleoside 5'-triphosphate = RNA(n+1) + diphosphate. Functionally, DNA-dependent RNA polymerase catalyzes the transcription of DNA into RNA using the four ribonucleoside triphosphates as substrates. This is DNA-directed RNA polymerase subunit beta from Acidovorax ebreus (strain TPSY) (Diaphorobacter sp. (strain TPSY)).